We begin with the raw amino-acid sequence, 144 residues long: UPF0735 ACT domain-containing protein LSEI_1046 (144 aa).

The ACT domain maps to 68–143 (VISLMLHHDR…GVSDVHLVSV (76 aa)).

The protein belongs to the UPF0735 family.

The protein is UPF0735 ACT domain-containing protein LSEI_1046 of Lacticaseibacillus paracasei (strain ATCC 334 / BCRC 17002 / CCUG 31169 / CIP 107868 / KCTC 3260 / NRRL B-441) (Lactobacillus paracasei).